The primary structure comprises 449 residues: UNC93-like protein MFSD11 (449 aa).

A helical transmembrane segment spans residues 8 to 28 (LFNIVILGVAFMFMFTAFQTC). An N-linked (GlcNAc...) asparagine glycan is attached at N40. 5 helical membrane-spanning segments follow: residues 53 to 73 (AIIYGVFSASNLITPSVVAIV), 74 to 94 (GPQISMFVSGLFYSMYIAVFI), 96 to 116 (PFPWSFYTASVFIGIAAAVLW), 138 to 158 (IFWALLQSSLFFGNLYIYFAW), and 170 to 190 (RTVFIALTVISLVGTVLFFLI). S204 carries the post-translational modification Phosphoserine. 6 helical membrane passes run 239-259 (MLLLSVTTAYTGLELTFFSGV), 277-297 (LIGLSGIFIGIGEILGGSLFG), 309-329 (PVVLLGTLVHFVAFYLIFLNM), 359-379 (FLLGLGDSCFNTQLLSILGFL), 385-405 (APAFAVFKFVQSICAAVAFFY), and 410-430 (LLHWQLLVMVIFGFFGTISFF).

It belongs to the unc-93 family. Widely expressed.

It is found in the membrane. The polypeptide is UNC93-like protein MFSD11 (Mfsd11) (Mus musculus (Mouse)).